The sequence spans 318 residues: Cuticle collagen dpy-7 (318 aa).

Triple-helical region regions lie at residues 101-130 (GPIG…DGLD), 147-206 (GPPG…PGDD), 209-235 (GGTG…NGLP), and 240-278 (GPPG…PGGH). The disordered stretch occupies residues 101–318 (GPIGPPGVSG…GYSGGGYGKK (218 aa)). Positions 187–204 (PQGEPGEQGEPGIKGPPG) are enriched in low complexity. Pro residues-rich tracts occupy residues 216-228 (PPGP…PKGP) and 250-268 (PPGP…PFGP). Over residues 309–318 (GYSGGGYGKK) the composition is skewed to gly residues.

This sequence belongs to the cuticular collagen family. In terms of assembly, collagen polypeptide chains are complexed within the cuticle by disulfide bonds and other types of covalent cross-links.

Its function is as follows. Nematode cuticles are composed largely of collagen-like proteins. The cuticle functions both as an exoskeleton and as a barrier to protect the worm from its environment. Mutations in dpy-7 affects the body shape. The sequence is that of Cuticle collagen dpy-7 (dpy-7) from Caenorhabditis elegans.